We begin with the raw amino-acid sequence, 285 residues long: (3S)-malyl-CoA thioesterase (285 aa).

Substrate contacts are provided by Arg70 and Glu122. Positions 122 and 148 each coordinate Mg(2+).

This sequence belongs to the HpcH/HpaI aldolase family. Homodimer or homotrimer. It depends on Mg(2+) as a cofactor.

It carries out the reaction (S)-malyl-CoA + H2O = (S)-malate + CoA + H(+). Reversibly inhibited by EDTA. Stimulated by the divalent cations Mg(2+) and Mn(2+). Functionally, catalyzes the hydrolysis of (3S)-malyl-CoA to (3S)-malate and free CoA. Inactive towards beta-methylmalyl-CoA and other CoA esters. In Cereibacter sphaeroides (strain ATCC 17023 / DSM 158 / JCM 6121 / CCUG 31486 / LMG 2827 / NBRC 12203 / NCIMB 8253 / ATH 2.4.1.) (Rhodobacter sphaeroides), this protein is (3S)-malyl-CoA thioesterase.